The chain runs to 232 residues: 5'-methylthioadenosine/S-adenosylhomocysteine nucleosidase (232 aa).

The active-site Proton acceptor is the glutamate 12. Substrate-binding positions include glycine 78, valine 152, and 173–174; that span reads ME. Aspartate 197 acts as the Proton donor in catalysis.

The protein belongs to the PNP/UDP phosphorylase family. MtnN subfamily. As to quaternary structure, homodimer.

The enzyme catalyses S-adenosyl-L-homocysteine + H2O = S-(5-deoxy-D-ribos-5-yl)-L-homocysteine + adenine. It catalyses the reaction S-methyl-5'-thioadenosine + H2O = 5-(methylsulfanyl)-D-ribose + adenine. It carries out the reaction 5'-deoxyadenosine + H2O = 5-deoxy-D-ribose + adenine. It participates in amino-acid biosynthesis; L-methionine biosynthesis via salvage pathway; S-methyl-5-thio-alpha-D-ribose 1-phosphate from S-methyl-5'-thioadenosine (hydrolase route): step 1/2. In terms of biological role, catalyzes the irreversible cleavage of the glycosidic bond in both 5'-methylthioadenosine (MTA) and S-adenosylhomocysteine (SAH/AdoHcy) to adenine and the corresponding thioribose, 5'-methylthioribose and S-ribosylhomocysteine, respectively. Also cleaves 5'-deoxyadenosine, a toxic by-product of radical S-adenosylmethionine (SAM) enzymes, into 5-deoxyribose and adenine. Thus, is required for in vivo function of the radical SAM enzymes biotin synthase and lipoic acid synthase, that are inhibited by 5'-deoxyadenosine accumulation. This Buchnera aphidicola subsp. Acyrthosiphon pisum (strain 5A) protein is 5'-methylthioadenosine/S-adenosylhomocysteine nucleosidase.